Consider the following 222-residue polypeptide: Histidine biosynthesis bifunctional protein HisIE (222 aa).

The tract at residues 1 to 128 (MQPLSPAFID…SNALSPPADA (128 aa)) is phosphoribosyl-AMP cyclohydrolase. A phosphoribosyl-ATP pyrophosphohydrolase region spans residues 129–222 (CTELFRVIES…AARRGAPRRH (94 aa)).

It in the N-terminal section; belongs to the PRA-CH family. In the C-terminal section; belongs to the PRA-PH family.

It is found in the cytoplasm. It catalyses the reaction 1-(5-phospho-beta-D-ribosyl)-ATP + H2O = 1-(5-phospho-beta-D-ribosyl)-5'-AMP + diphosphate + H(+). The catalysed reaction is 1-(5-phospho-beta-D-ribosyl)-5'-AMP + H2O = 1-(5-phospho-beta-D-ribosyl)-5-[(5-phospho-beta-D-ribosylamino)methylideneamino]imidazole-4-carboxamide. It participates in amino-acid biosynthesis; L-histidine biosynthesis; L-histidine from 5-phospho-alpha-D-ribose 1-diphosphate: step 2/9. The protein operates within amino-acid biosynthesis; L-histidine biosynthesis; L-histidine from 5-phospho-alpha-D-ribose 1-diphosphate: step 3/9. The polypeptide is Histidine biosynthesis bifunctional protein HisIE (Parasynechococcus marenigrum (strain WH8102)).